Reading from the N-terminus, the 142-residue chain is Ribosome maturation factor RimP (142 aa).

It belongs to the RimP family.

It is found in the cytoplasm. Functionally, required for maturation of 30S ribosomal subunits. The chain is Ribosome maturation factor RimP from Sulfurovum sp. (strain NBC37-1).